The following is a 539-amino-acid chain: Protoporphyrinogen oxidase (539 aa).

FAD is bound by residues 18–23, 43–44, tryptophan 51, 70–73, valine 300, and 521–523; these read GGGVSG, ES, GPRT, and PGV.

It belongs to the protoporphyrinogen/coproporphyrinogen oxidase family. Protoporphyrinogen oxidase subfamily. FAD serves as cofactor.

It localises to the mitochondrion inner membrane. It carries out the reaction protoporphyrinogen IX + 3 O2 = protoporphyrin IX + 3 H2O2. It participates in porphyrin-containing compound metabolism; protoporphyrin-IX biosynthesis; protoporphyrin-IX from protoporphyrinogen-IX: step 1/1. Its function is as follows. Catalyzes the 6-electron oxidation of protoporphyrinogen-IX to form protoporphyrin-IX. The protein is Protoporphyrinogen oxidase of Saccharomyces cerevisiae (strain ATCC 204508 / S288c) (Baker's yeast).